The primary structure comprises 252 residues: Acyltransferase PGAP2 (252 aa).

The Cytoplasmic segment spans residues 1-22 (MVPVGPERGANSLFSLRFTTFA). Residues 23–43 (VGTVSLPLFAFLFCIVWSLLF) form a helical membrane-spanning segment. Residues 44–77 (NFSETTATHCHVPNYLPSVSAAIGGETPQRYIWR) are Lumenal-facing. The helical transmembrane segment at 78-98 (LCIGLHSAPRFLVGVAYLHYY) threads the bilayer. At 99-111 (QGTPCSSPAYPRL) the chain is on the cytoplasmic side. The helical transmembrane segment at 112–132 (CHLNFLLNCCEIFFLILLTYV) threads the bilayer. Topologically, residues 133-142 (SSSENYEVHK) are lumenal. A helical transmembrane segment spans residues 143 to 163 (LGFMAFMLFSVGYMFVTCSLW). The Cytoplasmic portion of the chain corresponds to 164 to 184 (RVARKGSGSLEERTSYAWKKR). The helical transmembrane segment at 185–205 (LFGFYLLMFLSSILVYIWHNM) threads the bilayer. Over 206 to 208 (YCE) the chain is Lumenal. A helical transmembrane segment spans residues 209–229 (AGVYTVFALLEYLVVLSNMGF). Residues 230–252 (HMTAWWDFGNKELMICSPGDKRI) lie on the Cytoplasmic side of the membrane.

It belongs to the PGAP2 family.

It localises to the golgi apparatus membrane. Functionally, involved in the fatty acid remodeling steps of GPI-anchor maturation where the unsaturated acyl chain at sn-2 of inositol phosphate is replaced by a saturated stearoyl chain. May catalyze the second step of the fatty acid remodeling, by reacylating a lyso-GPI intermediate at sn-2 of inositol phosphate by a saturated chain. The fatty acid remodeling steps is critical for the integration of GPI-APs into lipid rafts. The chain is Acyltransferase PGAP2 from Xenopus tropicalis (Western clawed frog).